Here is a 259-residue protein sequence, read N- to C-terminus: DNA adenine methylase (259 aa).

Residues Tyr-7, Lys-11, 32 to 37 (FCGGLS), Asp-50, 156 to 157 (HF), Asp-171, and Tyr-181 contribute to the S-adenosyl-L-methionine site.

It belongs to the N(4)/N(6)-methyltransferase family. In terms of assembly, monomer.

The catalysed reaction is a 2'-deoxyadenosine in DNA + S-adenosyl-L-methionine = an N(6)-methyl-2'-deoxyadenosine in DNA + S-adenosyl-L-homocysteine + H(+). In terms of biological role, an alpha subtype methylase, recognizes the double-stranded sequence 5'-GATC-3' and methylates A-2. Also acts on 5-hydroxymethylcytosine (hmC)-containing DNA, the normal base in this virus. May prevent degradation of viral DNA by the host restriction-modification antiviral defense system. The protein is DNA adenine methylase of Enterobacteria phage T4 (Bacteriophage T4).